The primary structure comprises 149 residues: Transcriptional repressor NrdR (149 aa).

A zinc finger lies at 3 to 34 (CPFCFAVDTKVIDSRLVGEGSSVRRRRQCLVC). The region spanning 49-139 (PRVVKSNDVR…VYRSFEDIKE (91 aa)) is the ATP-cone domain.

The protein belongs to the NrdR family. Zn(2+) serves as cofactor.

Negatively regulates transcription of bacterial ribonucleotide reductase nrd genes and operons by binding to NrdR-boxes. The chain is Transcriptional repressor NrdR from Klebsiella pneumoniae (strain 342).